The following is a 200-amino-acid chain: MVSLRLPLILLSLLAISFSCSAAPPPVYDTEGHELSADGSYYVLPASPGHGGGLTMAPRVLPCPLLVAQETDERRKGFPVRFTPWGGAAAPEDRTIRVSTDVRIRFNAATICVQSTEWHVGDEPLTGARRVVTGPLIGPSPSGRENAFRVEKYGGGYKLVSCRDSCQDLGVSRDGARAWLGASQPPHVVVFKKARPSPPE.

The first 22 residues, 1 to 22 (MVSLRLPLILLSLLAISFSCSA), serve as a signal peptide directing secretion. 2 cysteine pairs are disulfide-bonded: Cys-63–Cys-112 and Cys-162–Cys-166.

It belongs to the protease inhibitor I3 (leguminous Kunitz-type inhibitor) family.

Functionally, this protein inhibits independently subtilisin and T.castaneum alpha-amylase but not barley alpha-amylase. This chain is Alpha-amylase/subtilisin inhibitor (RASI), found in Oryza sativa subsp. japonica (Rice).